A 166-amino-acid chain; its full sequence is Large ribosomal subunit protein mL49 (166 aa).

The protein belongs to the mitochondrion-specific ribosomal protein mL49 family. In terms of assembly, component of the mitochondrial ribosome large subunit (39S) which comprises a 16S rRNA and about 50 distinct proteins. Interacts with OXA1L.

The protein localises to the mitochondrion. The sequence is that of Large ribosomal subunit protein mL49 (MRPL49) from Bos taurus (Bovine).